The primary structure comprises 186 residues: Ribosome-recycling factor (186 aa).

The protein belongs to the RRF family.

Its subcellular location is the cytoplasm. Its function is as follows. Responsible for the release of ribosomes from messenger RNA at the termination of protein biosynthesis. May increase the efficiency of translation by recycling ribosomes from one round of translation to another. The polypeptide is Ribosome-recycling factor (Bordetella parapertussis (strain 12822 / ATCC BAA-587 / NCTC 13253)).